The following is a 141-amino-acid chain: Nucleoside diphosphate kinase (141 aa).

Lysine 11, phenylalanine 59, arginine 87, threonine 93, arginine 104, and asparagine 114 together coordinate ATP. The active-site Pros-phosphohistidine intermediate is histidine 117.

This sequence belongs to the NDK family. Homotetramer. It depends on Mg(2+) as a cofactor.

The protein resides in the cytoplasm. It carries out the reaction a 2'-deoxyribonucleoside 5'-diphosphate + ATP = a 2'-deoxyribonucleoside 5'-triphosphate + ADP. The catalysed reaction is a ribonucleoside 5'-diphosphate + ATP = a ribonucleoside 5'-triphosphate + ADP. In terms of biological role, major role in the synthesis of nucleoside triphosphates other than ATP. The ATP gamma phosphate is transferred to the NDP beta phosphate via a ping-pong mechanism, using a phosphorylated active-site intermediate. The sequence is that of Nucleoside diphosphate kinase from Neisseria meningitidis serogroup A / serotype 4A (strain DSM 15465 / Z2491).